Here is a 1187-residue protein sequence, read N- to C-terminus: Nucleolar protein 6 (1187 aa).

The segment covering 1 to 20 has biased composition (basic and acidic residues); that stretch reads MGRIKENQSKKKTLLRDSKA. Disordered stretches follow at residues 1-64 and 1134-1187; these read MGRI…FKHP and REQR…SALC.

The protein belongs to the NRAP family. In terms of assembly, part of the small subunit (SSU) processome, composed of more than 70 proteins and the RNA chaperone small nucleolar RNA (snoRNA) U3.

It localises to the nucleus. The protein localises to the nucleolus. It is found in the chromosome. In terms of biological role, part of the small subunit (SSU) processome, first precursor of the small eukaryotic ribosomal subunit. During the assembly of the SSU processome in the nucleolus, many ribosome biogenesis factors, an RNA chaperone and ribosomal proteins associate with the nascent pre-rRNA and work in concert to generate RNA folding, modifications, rearrangements and cleavage as well as targeted degradation of pre-ribosomal RNA by the RNA exosome. The sequence is that of Nucleolar protein 6 from Drosophila mojavensis (Fruit fly).